Reading from the N-terminus, the 139-residue chain is D-ribose pyranase (139 aa).

His20 functions as the Proton donor in the catalytic mechanism. Substrate contacts are provided by residues Asp28, His106, and 128 to 130; that span reads YAN.

This sequence belongs to the RbsD / FucU family. RbsD subfamily. As to quaternary structure, homodecamer.

The protein localises to the cytoplasm. The enzyme catalyses beta-D-ribopyranose = beta-D-ribofuranose. The protein operates within carbohydrate metabolism; D-ribose degradation; D-ribose 5-phosphate from beta-D-ribopyranose: step 1/2. Functionally, catalyzes the interconversion of beta-pyran and beta-furan forms of D-ribose. This chain is D-ribose pyranase, found in Escherichia coli O6:H1 (strain CFT073 / ATCC 700928 / UPEC).